The chain runs to 146 residues: Small ribosomal subunit protein bS6 (146 aa).

Residues 94–146 form a disordered region; sequence GPITTPSPMMQEGKSRPPHSSDEDSENTAPAKAKTADSPGEDTRTTEESDPKP. Composition is skewed to basic and acidic residues over residues 106 to 115 and 134 to 146; these read GKSRPPHSSD and EDTRTTEESDPKP.

It belongs to the bacterial ribosomal protein bS6 family.

Its function is as follows. Binds together with bS18 to 16S ribosomal RNA. The sequence is that of Small ribosomal subunit protein bS6 from Nitrosomonas europaea (strain ATCC 19718 / CIP 103999 / KCTC 2705 / NBRC 14298).